We begin with the raw amino-acid sequence, 416 residues long: Tryptophan synthase beta chain (416 aa).

Residues 1–23 (MTSTLPSQPKDMELANSSRPSVH) are disordered. An N6-(pyridoxal phosphate)lysine modification is found at K109.

The protein belongs to the TrpB family. In terms of assembly, tetramer of two alpha and two beta chains. Pyridoxal 5'-phosphate serves as cofactor.

The catalysed reaction is (1S,2R)-1-C-(indol-3-yl)glycerol 3-phosphate + L-serine = D-glyceraldehyde 3-phosphate + L-tryptophan + H2O. The protein operates within amino-acid biosynthesis; L-tryptophan biosynthesis; L-tryptophan from chorismate: step 5/5. Its function is as follows. The beta subunit is responsible for the synthesis of L-tryptophan from indole and L-serine. This Prochlorococcus marinus (strain MIT 9211) protein is Tryptophan synthase beta chain.